The following is a 343-amino-acid chain: Cell division protein ZipA (343 aa).

The Periplasmic portion of the chain corresponds to 1 to 4 (MDLN). A helical membrane pass occupies residues 5 to 25 (TILIILGILALIGLVAHGIWS). The Cytoplasmic portion of the chain corresponds to 26–343 (NRREKSQYFD…MAEAAYLARV (318 aa)). Positions 39 to 98 (AFHRNPQSTGRPSAQASQPMTPNFAQPAKETEQIRQTYQEPQVRQMSSSPEQQTRPTAQA) are disordered. 2 stretches are compositionally biased toward polar residues: residues 43–62 (NPQSTGRPSAQASQPMTPNF) and 72–95 (IRQTYQEPQVRQMSSSPEQQTRPT).

Belongs to the ZipA family. Interacts with FtsZ via their C-terminal domains.

The protein resides in the cell inner membrane. Essential cell division protein that stabilizes the FtsZ protofilaments by cross-linking them and that serves as a cytoplasmic membrane anchor for the Z ring. Also required for the recruitment to the septal ring of downstream cell division proteins. This chain is Cell division protein ZipA, found in Actinobacillus succinogenes (strain ATCC 55618 / DSM 22257 / CCUG 43843 / 130Z).